The primary structure comprises 448 residues: tRNA-2-methylthio-N(6)-dimethylallyladenosine synthase (448 aa).

Residues lysine 2 to lysine 119 form the MTTase N-terminal domain. Cysteine 11, cysteine 48, cysteine 82, cysteine 156, cysteine 160, and cysteine 163 together coordinate [4Fe-4S] cluster. The Radical SAM core domain maps to arginine 142 to glutamine 375. The region spanning glutamine 378–glutamate 444 is the TRAM domain.

This sequence belongs to the methylthiotransferase family. MiaB subfamily. In terms of assembly, monomer. The cofactor is [4Fe-4S] cluster.

It localises to the cytoplasm. It carries out the reaction N(6)-dimethylallyladenosine(37) in tRNA + (sulfur carrier)-SH + AH2 + 2 S-adenosyl-L-methionine = 2-methylsulfanyl-N(6)-dimethylallyladenosine(37) in tRNA + (sulfur carrier)-H + 5'-deoxyadenosine + L-methionine + A + S-adenosyl-L-homocysteine + 2 H(+). Functionally, catalyzes the methylthiolation of N6-(dimethylallyl)adenosine (i(6)A), leading to the formation of 2-methylthio-N6-(dimethylallyl)adenosine (ms(2)i(6)A) at position 37 in tRNAs that read codons beginning with uridine. The chain is tRNA-2-methylthio-N(6)-dimethylallyladenosine synthase from Polynucleobacter asymbioticus (strain DSM 18221 / CIP 109841 / QLW-P1DMWA-1) (Polynucleobacter necessarius subsp. asymbioticus).